A 395-amino-acid chain; its full sequence is Tryptophan synthase beta chain (395 aa).

Residue lysine 86 is modified to N6-(pyridoxal phosphate)lysine.

This sequence belongs to the TrpB family. In terms of assembly, tetramer of two alpha and two beta chains. Pyridoxal 5'-phosphate serves as cofactor.

It carries out the reaction (1S,2R)-1-C-(indol-3-yl)glycerol 3-phosphate + L-serine = D-glyceraldehyde 3-phosphate + L-tryptophan + H2O. It functions in the pathway amino-acid biosynthesis; L-tryptophan biosynthesis; L-tryptophan from chorismate: step 5/5. Its function is as follows. The beta subunit is responsible for the synthesis of L-tryptophan from indole and L-serine. The chain is Tryptophan synthase beta chain from Psychromonas ingrahamii (strain DSM 17664 / CCUG 51855 / 37).